A 159-amino-acid polypeptide reads, in one-letter code: 3-hydroxyacyl-[acyl-carrier-protein] dehydratase FabZ (159 aa).

Residue His-65 is part of the active site.

This sequence belongs to the thioester dehydratase family. FabZ subfamily.

The protein localises to the cytoplasm. It carries out the reaction a (3R)-hydroxyacyl-[ACP] = a (2E)-enoyl-[ACP] + H2O. Functionally, involved in unsaturated fatty acids biosynthesis. Catalyzes the dehydration of short chain beta-hydroxyacyl-ACPs and long chain saturated and unsaturated beta-hydroxyacyl-ACPs. The protein is 3-hydroxyacyl-[acyl-carrier-protein] dehydratase FabZ of Microcystis aeruginosa (strain NIES-843 / IAM M-2473).